The sequence spans 159 residues: Probable NADH dehydrogenase [ubiquinone] 1 alpha subcomplex subunit 12 (159 aa).

It belongs to the complex I NDUFA12 subunit family. As to quaternary structure, complex I is composed of at least 49 different subunits.

The protein resides in the mitochondrion inner membrane. In terms of biological role, accessory subunit of the mitochondrial membrane respiratory chain NADH dehydrogenase (Complex I), that is believed not to be involved in catalysis. Complex I functions in the transfer of electrons from NADH to the respiratory chain. The immediate electron acceptor for the enzyme is believed to be ubiquinone. The chain is Probable NADH dehydrogenase [ubiquinone] 1 alpha subcomplex subunit 12 from Arabidopsis thaliana (Mouse-ear cress).